The sequence spans 150 residues: Lipoprotein signal peptidase (150 aa).

The next 3 helical transmembrane spans lie at 5 to 25, 59 to 79, and 83 to 103; these read LSLVIIVVGIIADQVFKNWVV, QQWFFLVLTPIVLIVALWFLW, and GQNWYFAGLTLIIAGALGNFI. Catalysis depends on residues aspartate 113 and aspartate 129. The chain crosses the membrane as a helical span at residues 124–144; it reads IFNIADILLSVGFVVLFIAIL.

It belongs to the peptidase A8 family.

It localises to the cell membrane. The enzyme catalyses Release of signal peptides from bacterial membrane prolipoproteins. Hydrolyzes -Xaa-Yaa-Zaa-|-(S,diacylglyceryl)Cys-, in which Xaa is hydrophobic (preferably Leu), and Yaa (Ala or Ser) and Zaa (Gly or Ala) have small, neutral side chains.. Its pathway is protein modification; lipoprotein biosynthesis (signal peptide cleavage). Its function is as follows. This protein specifically catalyzes the removal of signal peptides from prolipoproteins. The sequence is that of Lipoprotein signal peptidase from Lactococcus lactis subsp. cremoris (strain MG1363).